The following is a 602-amino-acid chain: Solute carrier organic anion transporter family member 1C1 (602 aa).

Topologically, residues 1–43 (MDTSSKENIQLFCKTSVQPVGRPSFKTEYPSSEEKQPCCGELK) are cytoplasmic. A helical transmembrane segment spans residues 44 to 63 (VFLGALSFVYFAKALAEGYL). Residues 64-82 (KSTITQIERRFDIPSSLVG) are Extracellular-facing. The chain crosses the membrane as a helical span at residues 83–103 (VIDGSFEIGNLLVITFVSYFG). Over 104–109 (AKLHRP) the chain is Cytoplasmic. The helical transmembrane segment at 110–134 (KIIGAGCLIMGVGTLLIAMPQFFME) threads the bilayer. Residues 135 to 139 (QYKYE) lie on the Extracellular side of the membrane. The chain crosses the membrane as a helical span at residues 140–156 (IYSPSSNSTLSISPCLL). Residues 157–238 (ESSSQLPVSV…ARDFLPSLKY (82 aa)) are Cytoplasmic-facing. Residues 190-216 (PRSQSREDSNSSSEKSKFIRDDHTDYQ) are disordered. Residues 193–214 (QSREDSNSSSEKSKFIRDDHTD) show a composition bias toward basic and acidic residues. The helical transmembrane segment at 239-260 (LFGNPVYFLYLCTSTVQFNSLF) threads the bilayer. Topologically, residues 261–280 (GMVTYKPKYIEQQYGQSSSR) are extracellular. A helical membrane pass occupies residues 281 to 304 (ANFVIGLINIPAVALGIFSGGIAM). The Cytoplasmic segment spans residues 305 to 308 (KKFR). The helical transmembrane segment at 309 to 332 (ISVCGAAKLYLGSSVFGYLLFLSL) threads the bilayer. Over 333-444 (FALGCENSDV…NGCPQMFLYF (112 aa)) the chain is Extracellular. Residues 360–415 (RALFSDCNPRCKCSETKWEPMCGENGITYVSACPAGCQTSNRSGKNIIFYNCTCVG) form the Kazal-like domain. Disulfide bonds link Cys366–Cys396, Cys372–Cys392, and Cys381–Cys413. N-linked (GlcNAc...) asparagine glycans are attached at residues Asn400, Asn410, and Asn423. Residues 445 to 467 (LVISVITSYTLSLGGIPGYILLL) traverse the membrane as a helical segment. Residues 468–476 (RCIKPQLKS) are Cytoplasmic-facing. The chain crosses the membrane as a helical span at residues 477–502 (FALGIYTLSIRVLAGIPAPVYFGVLI). Residues 503–536 (DTSCLKWGFKRCGSRGSCRLYDSNVFRHIYLGLT) lie on the Extracellular side of the membrane. A helical membrane pass occupies residues 537–554 (VILGTVSIFLSIAVLFIL). The Cytoplasmic segment spans residues 555–602 (KKNYVSKHRNFITKRERTMVSTRFQKENCTTSDHLLQPKYWPGKETQL).

It belongs to the organo anion transporter (TC 2.A.60) family.

It is found in the cell membrane. It catalyses the reaction 3,3',5'-triiodo-L-thyronine(out) = 3,3',5'-triiodo-L-thyronine(in). The enzyme catalyses L-thyroxine(out) = L-thyroxine(in). The catalysed reaction is L-thyroxine sulfate(out) = L-thyroxine sulfate(in). In terms of biological role, mediates the Na(+)-independent high affinity transport of organic anions such as the thyroid hormones L-thyroxine (T4), L-thyroxine sulfate (T4S), and 3,3',5'-triiodo-L-thyronine (reverse T3, rT3) at the plasma membrane. Regulates T4 levels in different brain regions by transporting T4, and also by serving as an export pump for T4S, which is a source of T4 after hydrolysis by local sulfatases. Increases the access of these substrates to the intracellular sites where they are metabolized by the deiodinases. Other potential substrates, such as triiodothyronine (T3), 17-beta-glucuronosyl estradiol (17beta-estradiol 17-O-(beta-D-glucuronate)), estrone-3-sulfate (E1S) and sulfobromophthalein (BSP) are transported with much lower efficiency. Transports T4 and E1S in a pH-insensitive manner. Facilitates the transport of thyroid hormones across the blood-brain barrier and into glia and neuronal cells in the brain. This is Solute carrier organic anion transporter family member 1C1 (SLCO1C1) from Macaca fascicularis (Crab-eating macaque).